Here is a 284-residue protein sequence, read N- to C-terminus: L-ribulose-5-phosphate 3-epimerase UlaE (284 aa).

The protein belongs to the L-ribulose-5-phosphate 3-epimerase family.

The catalysed reaction is L-ribulose 5-phosphate = L-xylulose 5-phosphate. It functions in the pathway cofactor degradation; L-ascorbate degradation; D-xylulose 5-phosphate from L-ascorbate: step 3/4. Functionally, catalyzes the isomerization of L-xylulose-5-phosphate to L-ribulose-5-phosphate. Is involved in the anaerobic L-ascorbate utilization. This chain is L-ribulose-5-phosphate 3-epimerase UlaE, found in Escherichia coli O139:H28 (strain E24377A / ETEC).